Reading from the N-terminus, the 362-residue chain is Heme A synthase (362 aa).

5 consecutive transmembrane segments (helical) span residues 11-31, 102-122, 128-148, 159-179, and 198-218; these read AAIR…VLVG, VIGM…AVSG, LWLI…MVAS, VRLA…VWTL, and AWAL…VAGL. Heme is bound at residue histidine 262. A run of 3 helical transmembrane segments spans residues 264–286, 297–317, and 318–338; these read MTAY…AGAG, LAAI…VVPI, and SLAL…VLQA. Histidine 323 serves as a coordination point for heme.

It belongs to the COX15/CtaA family. Type 2 subfamily. Interacts with CtaB. Heme b is required as a cofactor.

It localises to the cell membrane. The catalysed reaction is Fe(II)-heme o + 2 A + H2O = Fe(II)-heme a + 2 AH2. Its pathway is porphyrin-containing compound metabolism; heme A biosynthesis; heme A from heme O: step 1/1. In terms of biological role, catalyzes the conversion of heme O to heme A by two successive hydroxylations of the methyl group at C8. The first hydroxylation forms heme I, the second hydroxylation results in an unstable dihydroxymethyl group, which spontaneously dehydrates, resulting in the formyl group of heme A. The sequence is that of Heme A synthase from Bradyrhizobium sp. (strain ORS 278).